The following is a 484-amino-acid chain: D-aminoacylase (484 aa).

It belongs to the metallo-dependent hydrolases superfamily. N-acyl-D-amino-acid deacylase family. Requires Zn(2+) as cofactor.

It is found in the cytoplasm. It catalyses the reaction an N-acyl-D-amino acid + H2O = a D-alpha-amino acid + a carboxylate. Functionally, has a wide specificity; hydrolyzes N-acyl derivative of neutral D-amino acids. The polypeptide is D-aminoacylase (dan) (Alcaligenes xylosoxydans xylosoxydans (Achromobacter xylosoxidans)).